We begin with the raw amino-acid sequence, 301 residues long: tRNA-cytidine(32) 2-sulfurtransferase (301 aa).

The short motif at 55-60 is the PP-loop motif element; it reads SGGKDS. [4Fe-4S] cluster contacts are provided by Cys-130, Cys-133, and Cys-221.

This sequence belongs to the TtcA family. In terms of assembly, homodimer. It depends on Mg(2+) as a cofactor. [4Fe-4S] cluster serves as cofactor.

The protein resides in the cytoplasm. It carries out the reaction cytidine(32) in tRNA + S-sulfanyl-L-cysteinyl-[cysteine desulfurase] + AH2 + ATP = 2-thiocytidine(32) in tRNA + L-cysteinyl-[cysteine desulfurase] + A + AMP + diphosphate + H(+). The protein operates within tRNA modification. In terms of biological role, catalyzes the ATP-dependent 2-thiolation of cytidine in position 32 of tRNA, to form 2-thiocytidine (s(2)C32). The sulfur atoms are provided by the cysteine/cysteine desulfurase (IscS) system. This chain is tRNA-cytidine(32) 2-sulfurtransferase, found in Acinetobacter baumannii (strain SDF).